The chain runs to 322 residues: Quinolinate synthase (322 aa).

Positions 37 and 54 each coordinate iminosuccinate. A [4Fe-4S] cluster-binding site is contributed by Cys-99. Iminosuccinate contacts are provided by residues 125–127 (YIN) and Ser-142. Residue Cys-185 participates in [4Fe-4S] cluster binding. Iminosuccinate contacts are provided by residues 211–213 (HPE) and Thr-228. Cys-278 provides a ligand contact to [4Fe-4S] cluster.

This sequence belongs to the quinolinate synthase family. Type 2 subfamily. [4Fe-4S] cluster is required as a cofactor.

It is found in the cytoplasm. The enzyme catalyses iminosuccinate + dihydroxyacetone phosphate = quinolinate + phosphate + 2 H2O + H(+). It functions in the pathway cofactor biosynthesis; NAD(+) biosynthesis; quinolinate from iminoaspartate: step 1/1. In terms of biological role, catalyzes the condensation of iminoaspartate with dihydroxyacetone phosphate to form quinolinate. The sequence is that of Quinolinate synthase from Prosthecochloris aestuarii (strain DSM 271 / SK 413).